Here is a 152-residue protein sequence, read N- to C-terminus: Large ribosomal subunit protein uL30 (152 aa).

The protein belongs to the universal ribosomal protein uL30 family. As to quaternary structure, part of the 50S ribosomal subunit.

The protein is Large ribosomal subunit protein uL30 of Archaeoglobus fulgidus (strain ATCC 49558 / DSM 4304 / JCM 9628 / NBRC 100126 / VC-16).